A 151-amino-acid chain; its full sequence is Myosin light polypeptide 6 (151 aa).

Cys2 carries the N-acetylcysteine modification. The EF-hand 1 domain occupies 7 to 42 (DQTAEFKEAFQLFDRTGDGKILYSQCGDVMRALGQN). Ser57 carries the phosphoserine modification. Residue Lys81 is modified to N6-acetyllysine. Positions 84–119 (GTYEDYVEGLRVFDKEGNGTVMGAEIRHVLVTLGEK) constitute an EF-hand 2 domain.

As to quaternary structure, myosin is a hexamer of 2 heavy chains and 4 light chains. Interacts with SPATA6.

Regulatory light chain of myosin. Does not bind calcium. The protein is Myosin light polypeptide 6 (MYL6) of Bos taurus (Bovine).